Here is a 438-residue protein sequence, read N- to C-terminus: Indole diterpene prenyltransferase paxD (438 aa).

Residue 80–81 participates in L-tryptophan binding; sequence FM. Substrate contacts are provided by Arg-102, Lys-190, Arg-264, Lys-266, Tyr-268, Tyr-349, and Tyr-418.

This sequence belongs to the tryptophan dimethylallyltransferase family.

It functions in the pathway secondary metabolite biosynthesis. Functionally, indole diterpene prenyltransferase; part of the gene cluster that mediates the biosynthesis of paxilline, a mycotoxin that acts as an inhibitor of mammalian maxi-K channels. PaxG, the geranylgeranyl diphosphate (GGPP) synthase is proposed to catalyze the first step in paxilline biosynthesis. Condensation of indole-3-glycerol phosphate with GGPP by paxC then forms 3-geranylgeranylindole (3-GGI), followed by epoxidation and cyclization of this intermediate (by paxM and paxB) to form paspaline. Paspaline is subsequently converted to 13-desoxypaxilline by paxP, the latter being then converted to paxilline by paxQ. Finally paxilline can be mono- and di-prenylated by paxD. This Penicillium paxilli protein is Indole diterpene prenyltransferase paxD.